Consider the following 240-residue polypeptide: NADH-quinone oxidoreductase subunit I 2 (240 aa).

2 consecutive 4Fe-4S ferredoxin-type domains span residues 57–86 (TDLR…IEWH) and 97–126 (DRFA…MGYD). The [4Fe-4S] cluster site is built by C66, C69, C72, C76, C106, C109, C112, and C116. The interval 185 to 240 (IHGYLGRPPLPKGYEPELKPQFRKPAEEAAEAQQAEAAGQPAAEPGKTNGEEAGQP) is disordered. The segment covering 198–211 (YEPELKPQFRKPAE) has biased composition (basic and acidic residues). The span at 215 to 230 (EAQQAEAAGQPAAEPG) shows a compositional bias: low complexity.

This sequence belongs to the complex I 23 kDa subunit family. NDH-1 is composed of 14 different subunits. Subunits NuoA, H, J, K, L, M, N constitute the membrane sector of the complex. The cofactor is [4Fe-4S] cluster.

It localises to the cell membrane. The enzyme catalyses a quinone + NADH + 5 H(+)(in) = a quinol + NAD(+) + 4 H(+)(out). In terms of biological role, NDH-1 shuttles electrons from NADH, via FMN and iron-sulfur (Fe-S) centers, to quinones in the respiratory chain. The immediate electron acceptor for the enzyme in this species is believed to be ubiquinone. Couples the redox reaction to proton translocation (for every two electrons transferred, four hydrogen ions are translocated across the cytoplasmic membrane), and thus conserves the redox energy in a proton gradient. The chain is NADH-quinone oxidoreductase subunit I 2 from Symbiobacterium thermophilum (strain DSM 24528 / JCM 14929 / IAM 14863 / T).